A 114-amino-acid polypeptide reads, in one-letter code: T cell receptor beta variable 28 (114 aa).

An N-terminal signal peptide occupies residues 1 to 26 (MGIRLLCRVAFCFLAVGLVDVKVTQS). Residues 27-114 (SRYLVKRTGE…TSMYLCASSL (88 aa)) enclose the Ig-like domain. Cysteines 42 and 110 form a disulfide. An N-linked (GlcNAc...) asparagine glycan is attached at asparagine 103.

Alpha-beta TR is a heterodimer composed of an alpha and beta chain; disulfide-linked. The alpha-beta TR is associated with the transmembrane signaling CD3 coreceptor proteins to form the TR-CD3 (TcR or TCR). The assembly of alpha-beta TR heterodimers with CD3 occurs in the endoplasmic reticulum where a single alpha-beta TR heterodimer associates with one CD3D-CD3E heterodimer, one CD3G-CD3E heterodimer and one CD247 homodimer forming a stable octameric structure. CD3D-CD3E and CD3G-CD3E heterodimers preferentially associate with TR alpha and TR beta chains, respectively. The association of the CD247 homodimer is the last step of TcR assembly in the endoplasmic reticulum and is required for transport to the cell surface.

The protein resides in the cell membrane. V region of the variable domain of T cell receptor (TR) beta chain that participates in the antigen recognition. Alpha-beta T cell receptors are antigen specific receptors which are essential to the immune response and are present on the cell surface of T lymphocytes. Recognize peptide-major histocompatibility (MH) (pMH) complexes that are displayed by antigen presenting cells (APC), a prerequisite for efficient T cell adaptive immunity against pathogens. Binding of alpha-beta TR to pMH complex initiates TR-CD3 clustering on the cell surface and intracellular activation of LCK that phosphorylates the ITAM motifs of CD3G, CD3D, CD3E and CD247 enabling the recruitment of ZAP70. In turn ZAP70 phosphorylates LAT, which recruits numerous signaling molecules to form the LAT signalosome. The LAT signalosome propagates signal branching to three major signaling pathways, the calcium, the mitogen-activated protein kinase (MAPK) kinase and the nuclear factor NF-kappa-B (NF-kB) pathways, leading to the mobilization of transcription factors that are critical for gene expression and essential for T cell growth and differentiation. The T cell repertoire is generated in the thymus, by V-(D)-J rearrangement. This repertoire is then shaped by intrathymic selection events to generate a peripheral T cell pool of self-MH restricted, non-autoaggressive T cells. Post-thymic interaction of alpha-beta TR with the pMH complexes shapes TR structural and functional avidity. The protein is T cell receptor beta variable 28 of Homo sapiens (Human).